The following is a 458-amino-acid chain: MQRPWAEPYKIKAVEPIRMTTREYREQAIREAGYNTFLLRSEDVYIDLLTDSGTNAMSDRQWGALMMGDEAYAGARSFFRLEEAVREIYGFKYVVPTHQGRGAEHLISRILIKPGDYIPGNMYFTTTRTHQELQGGTFVDVIIDEAHDPQANHPFKGNVDIAKFEALIDRVGADKIPYINVALTVNMAGGQPVSMANLREVRKVCDRHGIRMWSDATRAVENAYFIKEREEGYQDKPVREILKEMMSYFDGCTMSGKKDCLVNIGGFLAMNEEWILQKAREQVVIFEGMPTYGGLAGRDMEAIAQGIYEMVDDDYIAHRIHQVRYLGEQLLEAGIPIVQPIGGHAVFLDARAFLPHIPQDQFPAQALAAALYVDSGVRAMERGIVSAGRNPQTGEHNYPKLELVRLTIPRRVYTDRHMDVVAYSVKHLWKERDTIRGLRMVYEPPTLRFFTARFEPIS.

K258 is modified (N6-(pyridoxal phosphate)lysine).

It belongs to the beta-eliminating lyase family. As to quaternary structure, homotetramer. It depends on pyridoxal 5'-phosphate as a cofactor.

The catalysed reaction is L-tyrosine + H2O = phenol + pyruvate + NH4(+). This chain is Tyrosine phenol-lyase (tpl), found in Symbiobacterium sp. (strain SC-1).